The following is a 152-amino-acid chain: Interleukin-3 (152 aa).

Positions 1–19 (MSRLPVLLLLQLLVRPGLQ) are cleaved as a signal peptide. 2 N-linked (GlcNAc...) asparagine glycosylation sites follow: Asn34 and Asn89. Cys35 and Cys103 are disulfide-bonded.

Belongs to the IL-3 family. As to quaternary structure, monomer. Activated T-cells, mast cells, natural killer cells.

The protein localises to the secreted. Functionally, granulocyte/macrophage colony-stimulating factors are cytokines that act in hematopoiesis by controlling the production, differentiation, and function of 2 related white cell populations of the blood, the granulocytes and the monocytes-macrophages. Its function is as follows. This CSF induces granulocytes, macrophages, mast cells, stem cells, erythroid cells, eosinophils and megakaryocytes. In Pan troglodytes (Chimpanzee), this protein is Interleukin-3 (IL3).